An 819-amino-acid polypeptide reads, in one-letter code: ATP-dependent DNA helicase PIF4 (819 aa).

A mitochondrion-targeting transit peptide spans 1–84 (MLLNSTRTLL…RQASSAGHND (84 aa)). Residues 76 to 101 (QASSAGHNDLGLQEKEKSSGDESAFS) are disordered. 126 to 133 (GGAGVGKS) provides a ligand contact to ATP. The DNA-binding element occupies 734–754 (HIIYVAASRVKKFSQLRMINV).

Belongs to the helicase family. PIF1 subfamily. Monomer. Mg(2+) is required as a cofactor.

The protein resides in the mitochondrion matrix. It localises to the kinetoplast. It catalyses the reaction Couples ATP hydrolysis with the unwinding of duplex DNA at the replication fork by translocating in the 5'-3' direction. This creates two antiparallel DNA single strands (ssDNA). The leading ssDNA polymer is the template for DNA polymerase III holoenzyme which synthesizes a continuous strand.. The enzyme catalyses ATP + H2O = ADP + phosphate + H(+). In terms of biological role, DNA-dependent ATPase and 5'-3' DNA helicase required for the maintenance of mitochondrial (kinetoplast) genome stability. The chain is ATP-dependent DNA helicase PIF4 from Trypanosoma brucei brucei (strain 927/4 GUTat10.1).